The sequence spans 570 residues: CDKN2A-interacting protein (570 aa).

Ala-2 bears the N-acetylalanine mark. One can recognise an XRN2-binding (XTBD) domain in the interval Val-19–Ser-126. A disordered region spans residues Gly-122–Ser-345. Ser-124 is subject to Phosphoserine. Positions Val-147–Ala-162 are enriched in basic and acidic residues. Over residues Ser-167–Ser-183 the composition is skewed to low complexity. Lys-176 is covalently cross-linked (Glycyl lysine isopeptide (Lys-Gly) (interchain with G-Cter in SUMO1)). Positions Ala-184–Ser-198 are enriched in polar residues. Positions Ser-203–Gly-221 are enriched in low complexity. The segment covering Ser-224 to Gly-233 has biased composition (basic and acidic residues). Ser-234 carries the post-translational modification Phosphoserine. Composition is skewed to low complexity over residues Ser-234–Ser-248 and Ser-271–Ser-301. Positions Cys-302 to Ala-317 are enriched in polar residues. Over residues Ser-318 to Ser-345 the composition is skewed to low complexity. Ser-378 is subject to Phosphoserine. The segment at Ser-383–Ser-407 is disordered. In terms of domain architecture, DRBM spans Asn-452–Lys-527.

The protein belongs to the CARF family. In terms of assembly, interacts with CDKN2A/p14ARF, p53/TP53 and MDM2. Interacts with CHEK2 and MAPK3. Interacts with XRN2. In terms of processing, may be ubiquitinated.

The protein resides in the nucleus. Its subcellular location is the nucleoplasm. Functionally, regulates DNA damage response and cell proliferation in a dose-dependent manner through a number of signaling pathways involved in cell proliferation, apoptosis and senescence. In Rattus norvegicus (Rat), this protein is CDKN2A-interacting protein (Cdkn2aip).